The sequence spans 165 residues: Cyclic pyranopterin monophosphate synthase (165 aa).

Substrate contacts are provided by residues 76-78 (MCH) and 113-114 (IE). Asp128 is a catalytic residue.

This sequence belongs to the MoaC family. Homohexamer; trimer of dimers.

The catalysed reaction is (8S)-3',8-cyclo-7,8-dihydroguanosine 5'-triphosphate = cyclic pyranopterin phosphate + diphosphate. It functions in the pathway cofactor biosynthesis; molybdopterin biosynthesis. In terms of biological role, catalyzes the conversion of (8S)-3',8-cyclo-7,8-dihydroguanosine 5'-triphosphate to cyclic pyranopterin monophosphate (cPMP). This is Cyclic pyranopterin monophosphate synthase from Limosilactobacillus fermentum (strain NBRC 3956 / LMG 18251) (Lactobacillus fermentum).